Consider the following 152-residue polypeptide: Large-conductance mechanosensitive channel (152 aa).

A run of 3 helical transmembrane segments spans residues Ile21–Val41, Val44–Leu64, and Gly92–Val112.

This sequence belongs to the MscL family. Homopentamer.

Its subcellular location is the cell inner membrane. Channel that opens in response to stretch forces in the membrane lipid bilayer. May participate in the regulation of osmotic pressure changes within the cell. The protein is Large-conductance mechanosensitive channel of Bordetella bronchiseptica (strain ATCC BAA-588 / NCTC 13252 / RB50) (Alcaligenes bronchisepticus).